The primary structure comprises 225 residues: Phosphoribosylformylglycinamidine synthase subunit PurQ (225 aa).

The 220-residue stretch at 6–225 folds into the Glutamine amidotransferase type-1 domain; sequence FGVVVFPGSN…WQSILRSFAA (220 aa). Residue C89 is the Nucleophile of the active site. Catalysis depends on residues H198 and E200.

Part of the FGAM synthase complex composed of 1 PurL, 1 PurQ and 2 PurS subunits.

It localises to the cytoplasm. It catalyses the reaction N(2)-formyl-N(1)-(5-phospho-beta-D-ribosyl)glycinamide + L-glutamine + ATP + H2O = 2-formamido-N(1)-(5-O-phospho-beta-D-ribosyl)acetamidine + L-glutamate + ADP + phosphate + H(+). The enzyme catalyses L-glutamine + H2O = L-glutamate + NH4(+). Its pathway is purine metabolism; IMP biosynthesis via de novo pathway; 5-amino-1-(5-phospho-D-ribosyl)imidazole from N(2)-formyl-N(1)-(5-phospho-D-ribosyl)glycinamide: step 1/2. Part of the phosphoribosylformylglycinamidine synthase complex involved in the purines biosynthetic pathway. Catalyzes the ATP-dependent conversion of formylglycinamide ribonucleotide (FGAR) and glutamine to yield formylglycinamidine ribonucleotide (FGAM) and glutamate. The FGAM synthase complex is composed of three subunits. PurQ produces an ammonia molecule by converting glutamine to glutamate. PurL transfers the ammonia molecule to FGAR to form FGAM in an ATP-dependent manner. PurS interacts with PurQ and PurL and is thought to assist in the transfer of the ammonia molecule from PurQ to PurL. The chain is Phosphoribosylformylglycinamidine synthase subunit PurQ from Synechococcus sp. (strain JA-2-3B'a(2-13)) (Cyanobacteria bacterium Yellowstone B-Prime).